The chain runs to 488 residues: MSDFIASKEDDYSKWYLDIVQKAKLADYSPVKGCMVIMPYGYSIWSKIQSILDKKFKETGHENAYFPMLIPYGFLEKEKDHIEGFSPEFAIIKDAGGESLAEPLVLRPTSETIIWNMYSKWIKSYRDLPLKINQWANVVRWEKRTRPFLRTTEFLWQEGHTAHATEEEAVEETLLILDLYKRFMEDYLAIPVFCGKKSEKEKFAGAVSTYSIEALMQDKKALQAATSHYLGLNFAKAFDVKFQDKDGKMRHVFASSWGISTRLIGALIMVHSDEKGLILPPRIAPIEIIVIPIFKKEDEINKKILDYSDCVVHALKKAEFRVEIDKDVRSSPGFRFSSAEFKGIPIRIEVGINDVLLNSVTIMRRDKDRKFKYQISLDSLASKVKVELDSMQKDLFKKALNFRTLNTKEIFRIGKDSYELFKAYMNDHSGFVLSCWCGGLDCENIIKNETKATIRCIPDDFKAKDLTGMACIYCASRAKYFVLFAKSY.

The protein belongs to the class-II aminoacyl-tRNA synthetase family. ProS type 3 subfamily. As to quaternary structure, homodimer.

The protein localises to the cytoplasm. It catalyses the reaction tRNA(Pro) + L-proline + ATP = L-prolyl-tRNA(Pro) + AMP + diphosphate. Functionally, catalyzes the attachment of proline to tRNA(Pro) in a two-step reaction: proline is first activated by ATP to form Pro-AMP and then transferred to the acceptor end of tRNA(Pro). This is Proline--tRNA ligase from Borrelia garinii subsp. bavariensis (strain ATCC BAA-2496 / DSM 23469 / PBi) (Borreliella bavariensis).